The sequence spans 636 residues: Eisosome protein sle1 (636 aa).

The interval 1-297 (MSHASKNYNA…HVIIYENKEG (297 aa)) is required for targeting the protein to eisosomes. 6 disordered regions span residues 111–205 (ANYM…SPAN), 222–284 (YSPS…VPPV), 313–387 (DPSG…TQHF), 400–451 (QYYQ…QPSL), 467–550 (DITP…VNNA), and 572–604 (PSNHAYSEGRSYTFTGGQPPSVPTMPYGSRFAN). Polar residues-rich tracts occupy residues 131–159 (PSQQVRPSTSRSPSYASYNSEEVNFQSYQ), 166–178 (RTSQMYMPDNNYS), 188–204 (RRSSSYMVPANSRGSPA), 237–255 (SYNNVQRSSTVRNNTTQKS), and 315–354 (SGSNQASLRSTSTIHYTPSSKRISVIPPNTSNIGSRVVSR). The segment covering 355-383 (SGQNNNQPAQPGQYNQQSQPVQSYQSGQS) has biased composition (low complexity). Composition is skewed to polar residues over residues 400-412 (QYYQPSSPVQPVQ) and 422-439 (PVQSTQYYQPSSPVQPVQ). The segment covering 471-484 (TASSTTANNAYASA) has biased composition (low complexity). A compositionally biased stretch (basic and acidic residues) spans 503–512 (SFERERDSGR). Polar residues predominate over residues 572–589 (PSNHAYSEGRSYTFTGGQ).

As to quaternary structure, component of eisosomes, large cytoplasmic protein assemblies that localize to specialized domains termed MCCs on the plasma membrane.

It localises to the cytoplasm. The protein resides in the cell cortex. The protein localises to the cell tip. Its function is as follows. Important for the biogenesis of filamentous eisosomes, large cytoplasmic protein assemblies that localize to specialized domains on the plasma membrane to cluster specific proteins at sites of membrane invaginations. The sequence is that of Eisosome protein sle1 (sle1) from Schizosaccharomyces pombe (strain 972 / ATCC 24843) (Fission yeast).